Here is an 85-residue protein sequence, read N- to C-terminus: ATP synthase subunit c (85 aa).

A run of 2 helical transmembrane segments spans residues 10–30 and 65–85; these read GLAL…GAIG and AVAE…LLVV.

It belongs to the ATPase C chain family. F-type ATPases have 2 components, F(1) - the catalytic core - and F(0) - the membrane proton channel. F(1) has five subunits: alpha(3), beta(3), gamma(1), delta(1), epsilon(1). F(0) has three main subunits: a(1), b(2) and c(10-14). The alpha and beta chains form an alternating ring which encloses part of the gamma chain. F(1) is attached to F(0) by a central stalk formed by the gamma and epsilon chains, while a peripheral stalk is formed by the delta and b chains.

The protein localises to the cell inner membrane. F(1)F(0) ATP synthase produces ATP from ADP in the presence of a proton or sodium gradient. F-type ATPases consist of two structural domains, F(1) containing the extramembraneous catalytic core and F(0) containing the membrane proton channel, linked together by a central stalk and a peripheral stalk. During catalysis, ATP synthesis in the catalytic domain of F(1) is coupled via a rotary mechanism of the central stalk subunits to proton translocation. Functionally, key component of the F(0) channel; it plays a direct role in translocation across the membrane. A homomeric c-ring of between 10-14 subunits forms the central stalk rotor element with the F(1) delta and epsilon subunits. The polypeptide is ATP synthase subunit c (Thermotoga maritima (strain ATCC 43589 / DSM 3109 / JCM 10099 / NBRC 100826 / MSB8)).